A 185-amino-acid polypeptide reads, in one-letter code: ATP synthase subunit delta (185 aa).

Belongs to the ATPase delta chain family. In terms of assembly, F-type ATPases have 2 components, F(1) - the catalytic core - and F(0) - the membrane proton channel. F(1) has five subunits: alpha(3), beta(3), gamma(1), delta(1), epsilon(1). F(0) has three main subunits: a(1), b(2) and c(10-14). The alpha and beta chains form an alternating ring which encloses part of the gamma chain. F(1) is attached to F(0) by a central stalk formed by the gamma and epsilon chains, while a peripheral stalk is formed by the delta and b chains.

It is found in the cell inner membrane. Functionally, f(1)F(0) ATP synthase produces ATP from ADP in the presence of a proton or sodium gradient. F-type ATPases consist of two structural domains, F(1) containing the extramembraneous catalytic core and F(0) containing the membrane proton channel, linked together by a central stalk and a peripheral stalk. During catalysis, ATP synthesis in the catalytic domain of F(1) is coupled via a rotary mechanism of the central stalk subunits to proton translocation. In terms of biological role, this protein is part of the stalk that links CF(0) to CF(1). It either transmits conformational changes from CF(0) to CF(1) or is implicated in proton conduction. This chain is ATP synthase subunit delta, found in Ehrlichia chaffeensis (strain ATCC CRL-10679 / Arkansas).